We begin with the raw amino-acid sequence, 270 residues long: Undecaprenyl-diphosphatase 1 (270 aa).

Helical transmembrane passes span 41 to 61 (IEGF…VLLV), 88 to 108 (FRFI…GVLF), 117 to 137 (KDGV…LFLI), 192 to 212 (FSFL…ITDI), 218 to 238 (LGEL…ATYF), and 250 to 270 (GNLV…LIFA).

Belongs to the UppP family.

It is found in the cell membrane. It carries out the reaction di-trans,octa-cis-undecaprenyl diphosphate + H2O = di-trans,octa-cis-undecaprenyl phosphate + phosphate + H(+). Functionally, catalyzes the dephosphorylation of undecaprenyl diphosphate (UPP). Confers resistance to bacitracin. This chain is Undecaprenyl-diphosphatase 1, found in Bacillus licheniformis (strain ATCC 14580 / DSM 13 / JCM 2505 / CCUG 7422 / NBRC 12200 / NCIMB 9375 / NCTC 10341 / NRRL NRS-1264 / Gibson 46).